A 420-amino-acid polypeptide reads, in one-letter code: Corticotropin-releasing factor receptor 1 (420 aa).

Residues 1-28 (MVPGPRPALLLLLFLLQAFLLWDSPVAA) form the signal peptide. Topologically, residues 29-116 (SIQEQYCESL…CQEILSEEKR (88 aa)) are extracellular. 3 disulfides stabilise this stretch: cysteine 35-cysteine 59, cysteine 49-cysteine 92, and cysteine 73-cysteine 107. 5 N-linked (GlcNAc...) asparagine glycosylation sites follow: asparagine 43, asparagine 50, asparagine 83, asparagine 95, and asparagine 103. Residues 117–147 (SKLHYHIAVIINYLGHCVSLGTLLVAFVLFM) form a helical membrane-spanning segment. Over 148–154 (RLRSIRC) the chain is Cytoplasmic. A helical transmembrane segment spans residues 155–179 (LRNIIHWNLITAFILRNATWFVVQL). The Extracellular segment spans residues 180-194 (TMNPEVHESNVVWCR). The cysteines at positions 193 and 263 are disulfide-linked. A helical membrane pass occupies residues 195 to 223 (LVTAAYNYFHVTNFFWMFGEGCYLHTAIV). The Cytoplasmic segment spans residues 224–230 (LTYSTDK). Residues 231-258 (LRKWMFICIGWCIPFPIIVAWAIGKLYY) form a helical membrane-spanning segment. Over 259–274 (DNEKCWFGKRAGVYTD) the chain is Extracellular. A helical transmembrane segment spans residues 275–300 (YIYQGPMILVLLINFIFLFNIVRILM). Residues 301–311 (TKLRASTTSET) are Cytoplasmic-facing. The helical transmembrane segment at 312–336 (IQYRKAVKATLVLLSLLGITYMLFF) threads the bilayer. The Extracellular portion of the chain corresponds to 337–343 (VNPGEDE). The helical transmembrane segment at 344-373 (ISRIVFIYFNSFLESFQGFFVSVFYCFLNS) threads the bilayer. Topologically, residues 374 to 420 (EVRSAVRKRWHRWQDKHSIRARVARAMSIPTSPTRVSFHSIKQSSAV) are cytoplasmic.

This sequence belongs to the G-protein coupled receptor 2 family. Interacts (via N-terminal extracellular domain) with CRF and UCN.

The protein resides in the cell membrane. Functionally, G-protein coupled receptor for CRH (corticotropin-releasing factor) and UCN (urocortin). Has high affinity for CRH and UCN. Ligand binding causes a conformation change that triggers signaling via guanine nucleotide-binding proteins (G proteins) and down-stream effectors, such as adenylate cyclase. Promotes the activation of adenylate cyclase, leading to increased intracellular cAMP levels. The chain is Corticotropin-releasing factor receptor 1 (CRHR1) from Gallus gallus (Chicken).